The following is a 235-amino-acid chain: Ribonuclease P protein component 3 (235 aa).

This sequence belongs to the eukaryotic/archaeal RNase P protein component 3 family. In terms of assembly, consists of a catalytic RNA component and at least 4-5 protein subunits.

The protein resides in the cytoplasm. It carries out the reaction Endonucleolytic cleavage of RNA, removing 5'-extranucleotides from tRNA precursor.. Functionally, part of ribonuclease P, a protein complex that generates mature tRNA molecules by cleaving their 5'-ends. In Haloarcula marismortui (strain ATCC 43049 / DSM 3752 / JCM 8966 / VKM B-1809) (Halobacterium marismortui), this protein is Ribonuclease P protein component 3.